Reading from the N-terminus, the 38-residue chain is MTTPNPNKQSVELNRTSLFWGLLLIFVLAVLFSNYFFN.

Residues 17–37 (SLFWGLLLIFVLAVLFSNYFF) traverse the membrane as a helical segment.

The protein belongs to the PsbL family. In terms of assembly, PSII is composed of 1 copy each of membrane proteins PsbA, PsbB, PsbC, PsbD, PsbE, PsbF, PsbH, PsbI, PsbJ, PsbK, PsbL, PsbM, PsbT, PsbX, PsbY, PsbZ, Psb30/Ycf12, at least 3 peripheral proteins of the oxygen-evolving complex and a large number of cofactors. It forms dimeric complexes.

It is found in the plastid. Its subcellular location is the chloroplast thylakoid membrane. In terms of biological role, one of the components of the core complex of photosystem II (PSII). PSII is a light-driven water:plastoquinone oxidoreductase that uses light energy to abstract electrons from H(2)O, generating O(2) and a proton gradient subsequently used for ATP formation. It consists of a core antenna complex that captures photons, and an electron transfer chain that converts photonic excitation into a charge separation. This subunit is found at the monomer-monomer interface and is required for correct PSII assembly and/or dimerization. The polypeptide is Photosystem II reaction center protein L (Chaetosphaeridium globosum (Charophycean green alga)).